A 144-amino-acid polypeptide reads, in one-letter code: Small ribosomal subunit protein eS10A (144 aa).

The disordered stretch occupies residues 90–144 (THKRQVRPTAPRAGRPEPRERASADAGYRRAEKKDEGAAPSGFAPSFRGGFGRPQ). Residues 103-126 (GRPEPRERASADAGYRRAEKKDEG) are compositionally biased toward basic and acidic residues.

Belongs to the eukaryotic ribosomal protein eS10 family. As to quaternary structure, component of the small ribosomal subunit (SSU). Mature yeast ribosomes consist of a small (40S) and a large (60S) subunit. The 40S small subunit contains 1 molecule of ribosomal RNA (18S rRNA) and at least 33 different proteins. The large 60S subunit contains 3 rRNA molecules (25S, 5.8S and 5S rRNA) and at least 46 different proteins. eS10 interacts with GCN1 (via middle region); this interaction is direct and promotes GCN2 kinase activity.

The protein localises to the cytoplasm. Component of the ribosome, a large ribonucleoprotein complex responsible for the synthesis of proteins in the cell. The small ribosomal subunit (SSU) binds messenger RNAs (mRNAs) and translates the encoded message by selecting cognate aminoacyl-transfer RNA (tRNA) molecules. The large subunit (LSU) contains the ribosomal catalytic site termed the peptidyl transferase center (PTC), which catalyzes the formation of peptide bonds, thereby polymerizing the amino acids delivered by tRNAs into a polypeptide chain. The nascent polypeptides leave the ribosome through a tunnel in the LSU and interact with protein factors that function in enzymatic processing, targeting, and the membrane insertion of nascent chains at the exit of the ribosomal tunnel. eS10 plays a role as a positive regulator of the GCN2 kinase activity by stimulating GCN1-mediated GCN2 activation. This chain is Small ribosomal subunit protein eS10A (rps1001), found in Schizosaccharomyces pombe (strain 972 / ATCC 24843) (Fission yeast).